Here is a 322-residue protein sequence, read N- to C-terminus: Mas-related G-protein coupled receptor member B5 (322 aa).

Over 1 to 34 (MGLTTPAWNINNTVVNGSNNTEHFSCVSKFNTLN) the chain is Extracellular. 3 N-linked (GlcNAc...) asparagine glycosylation sites follow: N11, N16, and N19. The chain crosses the membrane as a helical span at residues 35–55 (FLTVIIAMFGLAGNAIVLWLL). Residues 56–70 (AFHLPRNAFSVYVCN) are Cytoplasmic-facing. Residues 71–91 (LACADFLQLCTQILGSLECFL) traverse the membrane as a helical segment. The Extracellular segment spans residues 92-98 (QLNRRHT). Residues 99–119 (FFLTVVFMFAYLAGLCMIAAI) traverse the membrane as a helical segment. The Cytoplasmic segment spans residues 120–147 (SVERSLSVMWPIWYHCQRPRHTSSIMCA). The helical transmembrane segment at 148–168 (LLWAFCLLLNFLLGEGCGLLF) threads the bilayer. Residues 169 to 172 (SDPK) lie on the Extracellular side of the membrane. A helical transmembrane segment spans residues 173-193 (YYFCITCALITTALIILLTVV). The Cytoplasmic portion of the chain corresponds to 194 to 216 (PSVSSLALLVKMICGSHRIPVTR). Residues 217–237 (FYVTIALTLVVFIFLGLPFGI) traverse the membrane as a helical segment. The Extracellular portion of the chain corresponds to 238–260 (YSSFLIMFKEFQSIFSYHVLEVT). The helical transmembrane segment at 261 to 281 (IFLSCVNSCANPIIYFLVGSI) threads the bilayer. Residues 282–322 (RQHRLQWQSLKLLLQRAMQDTPEEDSGERVPSQRSGELESV) lie on the Cytoplasmic side of the membrane. The interval 302 to 322 (TPEEDSGERVPSQRSGELESV) is disordered.

This sequence belongs to the G-protein coupled receptor 1 family. Mas subfamily.

It is found in the membrane. Functionally, orphan receptor. Probably involved in the function of nociceptive neurons. May regulate nociceptor function and/or development, including the sensation or modulation of pain. The protein is Mas-related G-protein coupled receptor member B5 (Mrgprb5) of Mus musculus (Mouse).